Consider the following 308-residue polypeptide: MIRHSTSTQVAAPLGAYLQVTKPGIIMGNLIAVVGGFLLAARGEVDAVLMLATLVGLSLVVASGCAINNYIDRDIDAKMQRTCRRATVTGAIPLKQVLGLGIALGVLGFGLLAWFTNLAALLFAAFGYLVYVGLYSLYMKRNSVYGTLVGSLSGAVPPVVGYCAVTGRMDGAALILLAMFSLWQMPHSYAIAIFRFKDYEAANIPVLPVAQGVEKAKLHIVFYIALFALVSTLLPLAGYTGVGFMAVSCVTSFWWLLMALKGYRSDVNLLRWSRQVFGFSILTIAILSLTMALDFQVAGQAPLLAMLG.

Helical transmembrane passes span 20-40, 47-67, 92-114, 118-137, 144-164, 174-194, 218-238, 240-260, and 275-295; these read VTKP…FLLA, AVLM…GCAI, IPLK…LLAW, LAAL…LYSL, VYGT…GYCA, LILL…IAIF, LHIV…PLAG, TGVG…LMAL, and QVFG…ALDF.

Belongs to the UbiA prenyltransferase family. Protoheme IX farnesyltransferase subfamily.

Its subcellular location is the cell inner membrane. The enzyme catalyses heme b + (2E,6E)-farnesyl diphosphate + H2O = Fe(II)-heme o + diphosphate. Its pathway is porphyrin-containing compound metabolism; heme O biosynthesis; heme O from protoheme: step 1/1. Converts heme B (protoheme IX) to heme O by substitution of the vinyl group on carbon 2 of heme B porphyrin ring with a hydroxyethyl farnesyl side group. In Shewanella loihica (strain ATCC BAA-1088 / PV-4), this protein is Protoheme IX farnesyltransferase 2.